We begin with the raw amino-acid sequence, 635 residues long: Threonine--tRNA ligase (635 aa).

Residues 1 to 61 (MVSIRLPDGS…DRDASLAIVT (61 aa)) enclose the TGS domain. Residues 242-533 (DHRKLGKQLD…LIEHHAGAMP (292 aa)) form a catalytic region. Zn(2+)-binding residues include Cys333, His384, and His510.

This sequence belongs to the class-II aminoacyl-tRNA synthetase family. In terms of assembly, homodimer. Zn(2+) serves as cofactor.

The protein resides in the cytoplasm. It carries out the reaction tRNA(Thr) + L-threonine + ATP = L-threonyl-tRNA(Thr) + AMP + diphosphate + H(+). Functionally, catalyzes the attachment of threonine to tRNA(Thr) in a two-step reaction: L-threonine is first activated by ATP to form Thr-AMP and then transferred to the acceptor end of tRNA(Thr). Also edits incorrectly charged L-seryl-tRNA(Thr). The polypeptide is Threonine--tRNA ligase (Burkholderia lata (strain ATCC 17760 / DSM 23089 / LMG 22485 / NCIMB 9086 / R18194 / 383)).